Consider the following 279-residue polypeptide: MQKYLEKANVLIEALPYIRKFNSKIILIKYGGSAMENEELKHCVMQDIALLKLVGLKPIIVHGGGKDISAMCEKLGVKSEFKNGLRVSDKATIEVASMVLNHINKNLVHSLQNLGVKAIGLCGKDGALLECVKKDENLAFVGTIQKVNSKILEELLEKDFLPIIAPIGMDENFNTYNINADDAACAIAKALRAEKLAFLTDTAGLYEDFNDKNSLISKISLEQAKILAPKIEGGMHVKLKSCIDACENGVKKVHILDGRVKHSLLLEFFTDEGIGTLVG.

Substrate is bound by residues 64–65 (GG), Arg-86, and Asn-177.

This sequence belongs to the acetylglutamate kinase family. ArgB subfamily.

Its subcellular location is the cytoplasm. It catalyses the reaction N-acetyl-L-glutamate + ATP = N-acetyl-L-glutamyl 5-phosphate + ADP. Its pathway is amino-acid biosynthesis; L-arginine biosynthesis; N(2)-acetyl-L-ornithine from L-glutamate: step 2/4. In terms of biological role, catalyzes the ATP-dependent phosphorylation of N-acetyl-L-glutamate. In Campylobacter jejuni subsp. jejuni serotype O:2 (strain ATCC 700819 / NCTC 11168), this protein is Acetylglutamate kinase.